The following is a 635-amino-acid chain: DNA-directed RNA polymerase subunit gamma (635 aa).

Residues Cys-74, Cys-76, Cys-89, and Cys-92 each coordinate Zn(2+). Asp-471, Asp-473, and Asp-475 together coordinate Mg(2+).

This sequence belongs to the RNA polymerase beta' chain family. RpoC1 subfamily. In cyanobacteria the RNAP catalytic core is composed of 2 alpha, 1 beta, 1 beta', 1 gamma and 1 omega subunit. When a sigma factor is associated with the core the holoenzyme is formed, which can initiate transcription. Requires Mg(2+) as cofactor. The cofactor is Zn(2+).

It carries out the reaction RNA(n) + a ribonucleoside 5'-triphosphate = RNA(n+1) + diphosphate. DNA-dependent RNA polymerase catalyzes the transcription of DNA into RNA using the four ribonucleoside triphosphates as substrates. This is DNA-directed RNA polymerase subunit gamma from Prochlorococcus marinus (strain NATL1A).